We begin with the raw amino-acid sequence, 334 residues long: Glycerol-3-phosphate dehydrogenase [NAD(P)+] 2 (334 aa).

NADPH contacts are provided by Trp16, Arg36, Arg37, and Lys110. Sn-glycerol 3-phosphate contacts are provided by Lys110 and Gly140. Ala144 provides a ligand contact to NADPH. The sn-glycerol 3-phosphate site is built by Lys195, Asp248, Ser258, Arg259, and Asn260. The Proton acceptor role is filled by Lys195. Arg259 contributes to the NADPH binding site. The NADPH site is built by Val282 and Glu284.

The protein belongs to the NAD-dependent glycerol-3-phosphate dehydrogenase family.

It is found in the cytoplasm. It carries out the reaction sn-glycerol 3-phosphate + NAD(+) = dihydroxyacetone phosphate + NADH + H(+). It catalyses the reaction sn-glycerol 3-phosphate + NADP(+) = dihydroxyacetone phosphate + NADPH + H(+). It functions in the pathway membrane lipid metabolism; glycerophospholipid metabolism. In terms of biological role, catalyzes the reduction of the glycolytic intermediate dihydroxyacetone phosphate (DHAP) to sn-glycerol 3-phosphate (G3P), the key precursor for phospholipid synthesis. The sequence is that of Glycerol-3-phosphate dehydrogenase [NAD(P)+] 2 from Mycobacterium tuberculosis (strain ATCC 25618 / H37Rv).